The primary structure comprises 316 residues: Cytochrome c biogenesis protein CcsA (316 aa).

The next 8 helical transmembrane spans lie at Val19–Trp39, Ser47–Phe67, Ile77–Leu97, Leu106–Leu126, Val151–Leu171, Thr224–Asn244, Thr258–Leu275, and Ala285–Leu305.

The protein belongs to the CcmF/CycK/Ccl1/NrfE/CcsA family. May interact with ccs1.

The protein resides in the cellular thylakoid membrane. Its function is as follows. Required during biogenesis of c-type cytochromes (cytochrome c6 and cytochrome f) at the step of heme attachment. This Prochlorococcus marinus (strain SARG / CCMP1375 / SS120) protein is Cytochrome c biogenesis protein CcsA.